Reading from the N-terminus, the 80-residue chain is Exodeoxyribonuclease 7 small subunit (80 aa).

It belongs to the XseB family. In terms of assembly, heterooligomer composed of large and small subunits.

The protein resides in the cytoplasm. The enzyme catalyses Exonucleolytic cleavage in either 5'- to 3'- or 3'- to 5'-direction to yield nucleoside 5'-phosphates.. In terms of biological role, bidirectionally degrades single-stranded DNA into large acid-insoluble oligonucleotides, which are then degraded further into small acid-soluble oligonucleotides. The chain is Exodeoxyribonuclease 7 small subunit from Rickettsia conorii (strain ATCC VR-613 / Malish 7).